Consider the following 284-residue polypeptide: Bifunctional protein FolD (284 aa).

NADP(+) contacts are provided by residues 166–168 (GRS) and serine 191.

This sequence belongs to the tetrahydrofolate dehydrogenase/cyclohydrolase family. As to quaternary structure, homodimer.

The enzyme catalyses (6R)-5,10-methylene-5,6,7,8-tetrahydrofolate + NADP(+) = (6R)-5,10-methenyltetrahydrofolate + NADPH. The catalysed reaction is (6R)-5,10-methenyltetrahydrofolate + H2O = (6R)-10-formyltetrahydrofolate + H(+). It participates in one-carbon metabolism; tetrahydrofolate interconversion. Functionally, catalyzes the oxidation of 5,10-methylenetetrahydrofolate to 5,10-methenyltetrahydrofolate and then the hydrolysis of 5,10-methenyltetrahydrofolate to 10-formyltetrahydrofolate. The protein is Bifunctional protein FolD of Leptospira borgpetersenii serovar Hardjo-bovis (strain JB197).